The sequence spans 321 residues: D-alanine--D-alanine ligase (321 aa).

The ATP-grasp domain maps to Arg-121–Lys-315. Pro-147 to Gln-199 lines the ATP pocket. 3 residues coordinate Mg(2+): Glu-268, Glu-282, and Asn-284.

Belongs to the D-alanine--D-alanine ligase family. Mg(2+) is required as a cofactor. It depends on Mn(2+) as a cofactor.

It localises to the cytoplasm. It catalyses the reaction 2 D-alanine + ATP = D-alanyl-D-alanine + ADP + phosphate + H(+). It functions in the pathway cell wall biogenesis; peptidoglycan biosynthesis. Its function is as follows. Cell wall formation. This chain is D-alanine--D-alanine ligase, found in Rickettsia africae (strain ESF-5).